Reading from the N-terminus, the 215-residue chain is Large ribosomal subunit protein uL3 (215 aa).

At Q151 the chain carries N5-methylglutamine.

This sequence belongs to the universal ribosomal protein uL3 family. In terms of assembly, part of the 50S ribosomal subunit. Forms a cluster with proteins L14 and L19. In terms of processing, methylated by PrmB.

One of the primary rRNA binding proteins, it binds directly near the 3'-end of the 23S rRNA, where it nucleates assembly of the 50S subunit. The protein is Large ribosomal subunit protein uL3 of Rickettsia bellii (strain OSU 85-389).